We begin with the raw amino-acid sequence, 307 residues long: Replicase polyprotein 1ab (307 aa).

The interval 1–76 is rdRp Fingers N-ter; the sequence is FNKFGKARLY…HQKCLKSIAA (76 aa). A Nsp12 RNA-dependent RNA polymerase domain is found at 1-307; sequence FNKFGKARLY…TDIEKGPHEF (307 aa). Residues 77-115 form a rdRp Palm N-ter region; the sequence is TRGVPVVIGTTKFYGGWDDMLRRLIKDVDSPVLMGWDYP. In terms of domain architecture, RdRp catalytic spans 107-269; that stretch reads PVLMGWDYPK…CYNSEFASKG (163 aa). The tract at residues 116-174 is rdRp Fingers C-ter; sequence KCDRAMPNILRIVSSLVLARKHDSCCSHTDRFYRLANECAQVLSEIVMCGGCYYVKPGG. The segment at 175–307 is rdRp Palm C-ter; that stretch reads TSSGDATTAF…TDIEKGPHEF (133 aa). Active-site residues include S254, D255, and D256. Position 307 (F307) is a region of interest, rdRp Thumb.

This sequence belongs to the coronaviruses polyprotein 1ab family.

It carries out the reaction RNA(n) + a ribonucleoside 5'-triphosphate = RNA(n+1) + diphosphate. The replicase polyprotein of coronaviruses is a multifunctional protein: it contains the activities necessary for the transcription of negative stranded RNA, leader RNA, subgenomic mRNAs and progeny virion RNA as well as proteinases responsible for the cleavage of the polyprotein into functional products. Its function is as follows. Non-structural protein 1: binds to the 40S ribosomal subunit and inhibits host translation. The nsp1-40S ribosome complex further induces an endonucleolytic cleavage near the 5'UTR of host mRNAs, targeting them for degradation. By suppressing host gene expression, nsp1 facilitates efficient viral gene expression in infected cells and evasion from host immune response. The polypeptide is Replicase polyprotein 1ab (rep) (Rattus norvegicus (Rat)).